Reading from the N-terminus, the 547-residue chain is G protein-coupled receptor associated sorting protein 3 (547 aa).

Basic residues-rich tracts occupy residues 1–10 and 38–48; these read MTGTKNKTRA and AKTRAKAKAKT. Residues 1-53 are disordered; the sequence is MTGTKNKTRAQAKTEKKPVTQAKAGAEREATGVVRPVAKTRAKAKAKTGSKTD.

Belongs to the GPRASP family. In terms of assembly, homodimer.

Its subcellular location is the cytoplasm. It is found in the nucleus. Survival and differentiation promoting protein that plays a role in the regulation of neurosynaptogenesis. Induces phosphatase PP2A activity which results in APP dephosphorylation and inhibits BACE1-mediated processing of APP. The polypeptide is G protein-coupled receptor associated sorting protein 3 (GPRASP3) (Macaca fascicularis (Crab-eating macaque)).